The primary structure comprises 533 residues: Flavin-dependent halogenase armH4 (533 aa).

Residues G16, A19, and E49 each contribute to the FAD site. Chloride is bound by residues S337 and G338. Position 339 (V339) interacts with FAD.

The protein belongs to the flavin-dependent halogenase family.

The catalysed reaction is melleolide F + FADH2 + chloride + O2 = 6'-chloromelleolide F + FAD + 2 H2O + H(+). It catalyses the reaction melleolide F + bromide + FADH2 + O2 = 6'-bromomelleolide F + FAD + 2 H2O. Flavin-dependent halogenase involved in the biosynthesis of melleolides, a range of antifungal and phytotoxic polyketide derivatives composed of an orsellinic acid (OA) moiety esterified to various sesquiterpene alcohols. The halogenase catalyzes the transfer of a single chlorine atom to the melleolide backbone, resulting in a 6'-chloromelleolide product. The enzyme acts on free substrate and does not depend on carrier-protein-dependent acceptor molecules. Can also catalyze the transfer of a single bromine atom to the melleolide backbone in vitro. The chain is Flavin-dependent halogenase armH4 from Armillaria mellea (Honey mushroom).